The following is a 451-amino-acid chain: MPPAGDDESPAATGDGYSKKVLQGRYELGRVLGQGASSKVYRARDARTGAHVAVKAIRKQQQPHHHPSCRSPEAAAAARRCVEVEREVAALRRVRGHPHVVALLDVLATRSTVYLVLELASGGSVLSALDSRGGGHYDEPAARRLFAQLASAVAHAHSLGVFHRDIKPENLLLDERGDLRLTDFGLSAFADADQHLGATDGLAATHCGSPAYVAPEILLKRRYDASKADVWSCGVVLFVLTAGYLPFNDGNLMAMYRKICAAKFRCPKWCSQELRSLIGRMLDPEPDTRIKIGEIFDHPWLQQDGSSSSFGMIQAASSHSKPEVEKWEAELEQAMELNAFDIIGFASGCDLSGLIGPLPDRVRFVLPGGDSKSVLDKVEKLGREEGLVVRRKEEEWCGGVHVEATSGKFTAYVRVNLLPKKILMIEAERVIGSEIPKFWHQLQIGNLLVRK.

The 276-residue stretch at 26–301 (YELGRVLGQG…IGEIFDHPWL (276 aa)) folds into the Protein kinase domain. ATP-binding positions include 32-40 (LGQGASSKV) and K55. Catalysis depends on D165, which acts as the Proton acceptor. The interval 183–216 (DFGLSAFADADQHLGATDGLAATHCGSPAYVAPE) is activation loop. One can recognise an NAF domain in the interval 330-356 (ELEQAMELNAFDIIGFASGCDLSGLIG). The interval 361–389 (RVRFVLPGGDSKSVLDKVEKLGREEGLVV) is PPI.

This sequence belongs to the protein kinase superfamily. CAMK Ser/Thr protein kinase family. SNF1 subfamily. The cofactor is Mn(2+).

The enzyme catalyses L-seryl-[protein] + ATP = O-phospho-L-seryl-[protein] + ADP + H(+). It carries out the reaction L-threonyl-[protein] + ATP = O-phospho-L-threonyl-[protein] + ADP + H(+). Its function is as follows. CIPK serine-threonine protein kinases interact with CBL proteins. Binding of a CBL protein to the regulatory NAF domain of CIPK protein lead to the activation of the kinase in a calcium-dependent manner. This is CBL-interacting protein kinase 22 (CIPK22) from Oryza sativa subsp. japonica (Rice).